Reading from the N-terminus, the 419-residue chain is Serine--tRNA ligase (419 aa).

Thr-226–Glu-228 lines the L-serine pocket. Residues Arg-257–Glu-259 and Val-273 contribute to the ATP site. Position 280 (Glu-280) interacts with L-serine. Glu-344–Ser-347 lines the ATP pocket. An L-serine-binding site is contributed by Thr-379.

Belongs to the class-II aminoacyl-tRNA synthetase family. Type-1 seryl-tRNA synthetase subfamily. As to quaternary structure, homodimer. The tRNA molecule binds across the dimer.

The protein localises to the cytoplasm. The catalysed reaction is tRNA(Ser) + L-serine + ATP = L-seryl-tRNA(Ser) + AMP + diphosphate + H(+). The enzyme catalyses tRNA(Sec) + L-serine + ATP = L-seryl-tRNA(Sec) + AMP + diphosphate + H(+). Its pathway is aminoacyl-tRNA biosynthesis; selenocysteinyl-tRNA(Sec) biosynthesis; L-seryl-tRNA(Sec) from L-serine and tRNA(Sec): step 1/1. Functionally, catalyzes the attachment of serine to tRNA(Ser). Is also able to aminoacylate tRNA(Sec) with serine, to form the misacylated tRNA L-seryl-tRNA(Sec), which will be further converted into selenocysteinyl-tRNA(Sec). In Mycobacterium tuberculosis (strain CDC 1551 / Oshkosh), this protein is Serine--tRNA ligase.